The primary structure comprises 480 residues: Probable glycosyltransferase 2 (480 aa).

A compositionally biased stretch (gly residues) spans 1–21 (MGQEGMGYNNGKGGGGGGGGL). Residues 1–45 (MGQEGMGYNNGKGGGGGGGGLPMTAPRPRGASPLSSHGHHHRSRK) are disordered. Topologically, residues 1 to 49 (MGQEGMGYNNGKGGGGGGGGLPMTAPRPRGASPLSSHGHHHRSRKIHRT) are cytoplasmic. A helical; Signal-anchor for type II membrane protein transmembrane segment spans residues 50-72 (FNNVKITVLCGLVTILVLRGTIG). Residues 73 to 480 (LNLSLPNQPT…DVKAKISTTS (408 aa)) are Lumenal-facing. N-linked (GlcNAc...) asparagine glycosylation is found at asparagine 74, asparagine 124, asparagine 129, and asparagine 458.

Belongs to the glycosyltransferase 34 family.

The protein localises to the golgi apparatus membrane. Functionally, probable glycosyltransferase that may be involved in the biosynthesis of xyloglucan. This is Probable glycosyltransferase 2 from Oryza sativa subsp. indica (Rice).